The primary structure comprises 337 residues: 4-hydroxy-3-methylbut-2-enyl diphosphate reductase (337 aa).

C25 contributes to the [4Fe-4S] cluster binding site. 2 residues coordinate (2E)-4-hydroxy-3-methylbut-2-enyl diphosphate: H54 and H87. Residues H54 and H87 each contribute to the dimethylallyl diphosphate site. Residues H54 and H87 each coordinate isopentenyl diphosphate. C109 serves as a coordination point for [4Fe-4S] cluster. H137 is a binding site for (2E)-4-hydroxy-3-methylbut-2-enyl diphosphate. Position 137 (H137) interacts with dimethylallyl diphosphate. Position 137 (H137) interacts with isopentenyl diphosphate. The active-site Proton donor is E139. A (2E)-4-hydroxy-3-methylbut-2-enyl diphosphate-binding site is contributed by T177. Residue C207 participates in [4Fe-4S] cluster binding. Residues S235, S236, N237, and S280 each contribute to the (2E)-4-hydroxy-3-methylbut-2-enyl diphosphate site. Dimethylallyl diphosphate-binding residues include S235, S236, N237, and S280. Isopentenyl diphosphate is bound by residues S235, S236, N237, and S280.

Belongs to the IspH family. [4Fe-4S] cluster serves as cofactor.

It carries out the reaction isopentenyl diphosphate + 2 oxidized [2Fe-2S]-[ferredoxin] + H2O = (2E)-4-hydroxy-3-methylbut-2-enyl diphosphate + 2 reduced [2Fe-2S]-[ferredoxin] + 2 H(+). It catalyses the reaction dimethylallyl diphosphate + 2 oxidized [2Fe-2S]-[ferredoxin] + H2O = (2E)-4-hydroxy-3-methylbut-2-enyl diphosphate + 2 reduced [2Fe-2S]-[ferredoxin] + 2 H(+). It functions in the pathway isoprenoid biosynthesis; dimethylallyl diphosphate biosynthesis; dimethylallyl diphosphate from (2E)-4-hydroxy-3-methylbutenyl diphosphate: step 1/1. Its pathway is isoprenoid biosynthesis; isopentenyl diphosphate biosynthesis via DXP pathway; isopentenyl diphosphate from 1-deoxy-D-xylulose 5-phosphate: step 6/6. Its function is as follows. Catalyzes the conversion of 1-hydroxy-2-methyl-2-(E)-butenyl 4-diphosphate (HMBPP) into a mixture of isopentenyl diphosphate (IPP) and dimethylallyl diphosphate (DMAPP). Acts in the terminal step of the DOXP/MEP pathway for isoprenoid precursor biosynthesis. This is 4-hydroxy-3-methylbut-2-enyl diphosphate reductase from Leifsonia xyli subsp. xyli (strain CTCB07).